Consider the following 158-residue polypeptide: MQGRLSAWLVKHGLIHRSLGFDYQGIETLQIKPEDWHSIAVIFYVYGYNYLRSQCAYDVAPGGLLASVYHLTRIEDDVDQPEELCIKVFASRRNPRIPSVFWVWKSVDFQERESYDMLGISYDNHPRLKRILMPESWIGWPLRKDYIAPNFYEIQDAH.

This sequence belongs to the complex I 30 kDa subunit family. In terms of assembly, NDH is composed of at least 16 different subunits, 5 of which are encoded in the nucleus.

It localises to the plastid. Its subcellular location is the chloroplast thylakoid membrane. The catalysed reaction is a plastoquinone + NADH + (n+1) H(+)(in) = a plastoquinol + NAD(+) + n H(+)(out). It catalyses the reaction a plastoquinone + NADPH + (n+1) H(+)(in) = a plastoquinol + NADP(+) + n H(+)(out). In terms of biological role, NDH shuttles electrons from NAD(P)H:plastoquinone, via FMN and iron-sulfur (Fe-S) centers, to quinones in the photosynthetic chain and possibly in a chloroplast respiratory chain. The immediate electron acceptor for the enzyme in this species is believed to be plastoquinone. Couples the redox reaction to proton translocation, and thus conserves the redox energy in a proton gradient. This Solanum tuberosum (Potato) protein is NAD(P)H-quinone oxidoreductase subunit J, chloroplastic.